The following is a 227-amino-acid chain: Probable GTP-binding protein EngB (227 aa).

One can recognise an EngB-type G domain in the interval 41 to 216 (GRPEVAFAGR…RAEIARFAVP (176 aa)). Residues 49–56 (GRSNVGKS), 76–80 (GRTKQ), 94–97 (DMPG), 161–164 (TKCD), and 195–197 (TSS) each bind GTP. Mg(2+) contacts are provided by serine 56 and threonine 78.

This sequence belongs to the TRAFAC class TrmE-Era-EngA-EngB-Septin-like GTPase superfamily. EngB GTPase family. It depends on Mg(2+) as a cofactor.

Necessary for normal cell division and for the maintenance of normal septation. The protein is Probable GTP-binding protein EngB of Gluconobacter oxydans (strain 621H) (Gluconobacter suboxydans).